Consider the following 309-residue polypeptide: tRNA pseudouridine synthase B (309 aa).

The active-site Nucleophile is the D39.

This sequence belongs to the pseudouridine synthase TruB family. Type 1 subfamily.

The catalysed reaction is uridine(55) in tRNA = pseudouridine(55) in tRNA. Functionally, responsible for synthesis of pseudouridine from uracil-55 in the psi GC loop of transfer RNAs. This Bacillus velezensis (strain DSM 23117 / BGSC 10A6 / LMG 26770 / FZB42) (Bacillus amyloliquefaciens subsp. plantarum) protein is tRNA pseudouridine synthase B.